The following is a 481-amino-acid chain: Probable glycine dehydrogenase (decarboxylating) subunit 2 (481 aa).

The interval 1–23 is disordered; it reads MVIFEKTRGKNSPSVMPSKKGDV. K263 carries the N6-(pyridoxal phosphate)lysine modification.

The protein belongs to the GcvP family. C-terminal subunit subfamily. As to quaternary structure, the glycine cleavage system is composed of four proteins: P, T, L and H. In this organism, the P 'protein' is a heterodimer of two subunits. Pyridoxal 5'-phosphate is required as a cofactor.

The catalysed reaction is N(6)-[(R)-lipoyl]-L-lysyl-[glycine-cleavage complex H protein] + glycine + H(+) = N(6)-[(R)-S(8)-aminomethyldihydrolipoyl]-L-lysyl-[glycine-cleavage complex H protein] + CO2. The glycine cleavage system catalyzes the degradation of glycine. The P protein binds the alpha-amino group of glycine through its pyridoxal phosphate cofactor; CO(2) is released and the remaining methylamine moiety is then transferred to the lipoamide cofactor of the H protein. The sequence is that of Probable glycine dehydrogenase (decarboxylating) subunit 2 from Francisella philomiragia subsp. philomiragia (strain ATCC 25017 / CCUG 19701 / FSC 153 / O#319-036).